Reading from the N-terminus, the 114-residue chain is uncharacterized protein (114 aa).

A compositionally biased stretch (basic residues) spans 18–29 (TRKRNSHKKVTK). 2 disordered regions span residues 18–47 (TRKR…RRTG) and 65–108 (SRPR…KLLN). Basic and acidic residues predominate over residues 30–41 (RAVEKRKQDSTR).

This is an uncharacterized protein from Homo sapiens (Human).